Here is a 411-residue protein sequence, read N- to C-terminus: D-ribitol-5-phosphate cytidylyltransferase (411 aa).

Belongs to the IspD/TarI cytidylyltransferase family. IspD subfamily. In terms of assembly, homodimer.

Its subcellular location is the cytoplasm. The protein localises to the cytosol. The catalysed reaction is D-ribitol 5-phosphate + CTP + H(+) = CDP-L-ribitol + diphosphate. It carries out the reaction D-ribose 5-phosphate + CTP + H(+) = CDP-D-ribose + diphosphate. The enzyme catalyses D-ribulose 5-phosphate + CTP + H(+) = CDP-D-ribulose + diphosphate. The protein operates within protein modification; protein glycosylation. Functionally, cytidylyltransferase required for protein O-linked mannosylation. Catalyzes the formation of CDP-ribitol nucleotide sugar from D-ribitol 5-phosphate. CDP-ribitol is a substrate of FKTN during the biosynthesis of the phosphorylated O-mannosyl trisaccharide (N-acetylgalactosamine-beta-3-N-acetylglucosamine-beta-4-(phosphate-6-)mannose), a carbohydrate structure present in alpha-dystroglycan (DAG1), which is required for binding laminin G-like domain-containing extracellular proteins with high affinity. Shows activity toward other pentose phosphate sugars and mediates formation of CDP-ribulose or CDP-ribose using CTP and ribulose-5-phosphate or ribose-5-phosphate, respectively. Not involved in dolichol production. This is D-ribitol-5-phosphate cytidylyltransferase (crppa) from Xenopus tropicalis (Western clawed frog).